The chain runs to 900 residues: DNA mismatch repair protein MutS (900 aa).

637–644 (GPNMAGKS) contacts ATP.

The protein belongs to the DNA mismatch repair MutS family.

Its function is as follows. This protein is involved in the repair of mismatches in DNA. It is possible that it carries out the mismatch recognition step. This protein has a weak ATPase activity. The protein is DNA mismatch repair protein MutS of Methanosarcina mazei (strain ATCC BAA-159 / DSM 3647 / Goe1 / Go1 / JCM 11833 / OCM 88) (Methanosarcina frisia).